A 249-amino-acid polypeptide reads, in one-letter code: Phosphate import ATP-binding protein PstB (249 aa).

Residues 3–244 (IEANDVHVYY…PKKKRTQNYI (242 aa)) form the ABC transporter domain. Residue 35–42 (GPSGCGKS) participates in ATP binding.

It belongs to the ABC transporter superfamily. Phosphate importer (TC 3.A.1.7) family. As to quaternary structure, the complex is composed of two ATP-binding proteins (PstB), two transmembrane proteins (PstC and PstA) and a solute-binding protein (PstS).

The protein localises to the cell inner membrane. The enzyme catalyses phosphate(out) + ATP + H2O = ADP + 2 phosphate(in) + H(+). In terms of biological role, part of the ABC transporter complex PstSACB involved in phosphate import. Responsible for energy coupling to the transport system. This is Phosphate import ATP-binding protein PstB from Cytophaga hutchinsonii (strain ATCC 33406 / DSM 1761 / CIP 103989 / NBRC 15051 / NCIMB 9469 / D465).